The sequence spans 1066 residues: Carbamoyl phosphate synthase large chain (1066 aa).

Residues 1-401 (MPKNNNIKKV…ALMKAVRSLE (401 aa)) form a carboxyphosphate synthetic domain region. Arginine 129, arginine 169, glycine 175, glycine 176, arginine 208, isoleucine 210, glutamate 215, glycine 241, valine 242, histidine 243, glutamine 284, and glutamate 298 together coordinate ATP. The ATP-grasp 1 domain occupies 133–327 (KNTMEKIGEP…IAKVAAKIAL (195 aa)). Residues glutamine 284, glutamate 298, and asparagine 300 each contribute to the Mg(2+) site. The Mn(2+) site is built by glutamine 284, glutamate 298, and asparagine 300. Positions 402 to 547 (QNIYSMNYGD…YSCFDSENEV (146 aa)) are oligomerization domain. Residues 548–931 (DATKTKKKVL…ALYKAFLGAG (384 aa)) are carbamoyl phosphate synthetic domain. The ATP-grasp 2 domain occupies 673 to 863 (DEILEKCCIP…IVSLASKAVL (191 aa)). ATP is bound by residues arginine 709, lysine 748, leucine 750, glutamate 754, glycine 779, isoleucine 780, histidine 781, serine 782, glutamine 822, and glutamate 834. Glutamine 822, glutamate 834, and asparagine 836 together coordinate Mg(2+). Mn(2+)-binding residues include glutamine 822, glutamate 834, and asparagine 836. Residues 932-1066 (INLPKHKKMI…ELSLIDIARI (135 aa)) enclose the MGS-like domain. Positions 932–1066 (INLPKHKKMI…ELSLIDIARI (135 aa)) are allosteric domain.

It belongs to the CarB family. As to quaternary structure, composed of two chains; the small (or glutamine) chain promotes the hydrolysis of glutamine to ammonia, which is used by the large (or ammonia) chain to synthesize carbamoyl phosphate. Tetramer of heterodimers (alpha,beta)4. Mg(2+) is required as a cofactor. It depends on Mn(2+) as a cofactor.

The catalysed reaction is hydrogencarbonate + L-glutamine + 2 ATP + H2O = carbamoyl phosphate + L-glutamate + 2 ADP + phosphate + 2 H(+). It catalyses the reaction hydrogencarbonate + NH4(+) + 2 ATP = carbamoyl phosphate + 2 ADP + phosphate + 2 H(+). Its pathway is amino-acid biosynthesis; L-arginine biosynthesis; carbamoyl phosphate from bicarbonate: step 1/1. The protein operates within pyrimidine metabolism; UMP biosynthesis via de novo pathway; (S)-dihydroorotate from bicarbonate: step 1/3. Its function is as follows. Large subunit of the glutamine-dependent carbamoyl phosphate synthetase (CPSase). CPSase catalyzes the formation of carbamoyl phosphate from the ammonia moiety of glutamine, carbonate, and phosphate donated by ATP, constituting the first step of 2 biosynthetic pathways, one leading to arginine and/or urea and the other to pyrimidine nucleotides. The large subunit (synthetase) binds the substrates ammonia (free or transferred from glutamine from the small subunit), hydrogencarbonate and ATP and carries out an ATP-coupled ligase reaction, activating hydrogencarbonate by forming carboxy phosphate which reacts with ammonia to form carbamoyl phosphate. The polypeptide is Carbamoyl phosphate synthase large chain (Lachnoclostridium phytofermentans (strain ATCC 700394 / DSM 18823 / ISDg) (Clostridium phytofermentans)).